We begin with the raw amino-acid sequence, 469 residues long: Swarming motility regulation sensor protein RssA (469 aa).

Transmembrane regions (helical) follow at residues 12 to 32 (IIFQ…WVKY) and 167 to 187 (VPLL…AYFS). One can recognise a Histidine kinase domain in the interval 245 to 459 (DAAHELRTPI…GFIIDLPESY (215 aa)). His-248 bears the Phosphohistidine; by autocatalysis mark.

It localises to the cell inner membrane. The enzyme catalyses ATP + protein L-histidine = ADP + protein N-phospho-L-histidine.. Its function is as follows. Member of the two-component regulatory system RssA/RssB involved in regulation of swarming motility which has been shown to be inhibited by saturated fatty acids. RssA/RssB regulates cellular fatty acid composition, hemolysin production and cell surface topography. RssA/RssB negatively regulates the activity of SlhBA. It can also act as a negative regulator for the control of the swarming initiation. The polypeptide is Swarming motility regulation sensor protein RssA (rssA) (Serratia marcescens).